Consider the following 566-residue polypeptide: Repressible alkaline phosphatase (566 aa).

The segment covering 1 to 11 (MMTHTLPSEQT) has biased composition (polar residues). Positions 1-27 (MMTHTLPSEQTRLVPGSDSSSRPKKRR) are disordered. Topologically, residues 1-33 (MMTHTLPSEQTRLVPGSDSSSRPKKRRISKRSK) are cytoplasmic. The helical transmembrane segment at 34–59 (IIVSTVVCIGLLLVLVQLAFPSSFAL) threads the bilayer. Aspartate 75 contributes to the Mg(2+) binding site. Aspartate 75 serves as a coordination point for Zn(2+). Serine 123 acts as the Phosphoserine intermediate in catalysis. A Phosphoserine modification is found at serine 123. Mg(2+)-binding residues include aspartate 174 and threonine 176. N-linked (GlcNAc...) asparagine glycosylation is present at asparagine 268. Residue glutamate 325 coordinates Mg(2+). Residues aspartate 330, histidine 334, aspartate 373, and histidine 374 each contribute to the Zn(2+) site. N-linked (GlcNAc...) asparagine glycosylation occurs at asparagine 401. Histidine 484 is a Zn(2+) binding site.

It belongs to the alkaline phosphatase family. The cofactor is Mg(2+). It depends on Zn(2+) as a cofactor.

It localises to the vacuole membrane. The protein resides in the cytoplasm. It catalyses the reaction a phosphate monoester + H2O = an alcohol + phosphate. The enzyme catalyses (2E,6E)-farnesyl diphosphate + H2O = (2E,6E)-farnesol + diphosphate. The catalysed reaction is beta-D-fructose 2,6-bisphosphate + H2O = beta-D-fructose 2-phosphate + phosphate. Functionally, phosphatase with broad substrate specificity. A truncated (soluble) version of the protein is responsible for the production of (E,E)-farnesol from (E,E)-farnesyl diphosphate. Acts as a fructose-2,6-bisphosphate 6-phosphatase. The chain is Repressible alkaline phosphatase (PHO8) from Saccharomyces cerevisiae (strain ATCC 204508 / S288c) (Baker's yeast).